A 92-amino-acid chain; its full sequence is Small ribosomal subunit protein uS19c (92 aa).

It belongs to the universal ribosomal protein uS19 family.

It is found in the plastid. The protein resides in the chloroplast. Functionally, protein S19 forms a complex with S13 that binds strongly to the 16S ribosomal RNA. This is Small ribosomal subunit protein uS19c from Nymphaea alba (White water-lily).